The sequence spans 52 residues: NADH dehydrogenase [ubiquinone] 1 alpha subcomplex subunit 4 homolog (52 aa).

The chain crosses the membrane as a helical span at residues 14 to 30; it reads LYPLGAAVATAVGFATY.

Belongs to the complex I NDUFA4 subunit family.

The protein resides in the mitochondrion inner membrane. Functionally, accessory subunit of the mitochondrial membrane respiratory chain NADH dehydrogenase (Complex I), that is believed to be not involved in catalysis. Complex I functions in the transfer of electrons from NADH to the respiratory chain. The immediate electron acceptor for the enzyme is believed to be ubiquinone. The protein is NADH dehydrogenase [ubiquinone] 1 alpha subcomplex subunit 4 homolog of Schizosaccharomyces pombe (strain 972 / ATCC 24843) (Fission yeast).